The sequence spans 122 residues: Large ribosomal subunit protein bL19 (122 aa).

It belongs to the bacterial ribosomal protein bL19 family.

Its function is as follows. This protein is located at the 30S-50S ribosomal subunit interface and may play a role in the structure and function of the aminoacyl-tRNA binding site. In Chlamydia abortus (strain DSM 27085 / S26/3) (Chlamydophila abortus), this protein is Large ribosomal subunit protein bL19.